A 483-amino-acid polypeptide reads, in one-letter code: Glutamate--tRNA ligase (483 aa).

Positions 11–21 (PSPTGLLHIGN) match the 'HIGH' region motif. Positions 255-259 (KLSKR) match the 'KMSKS' region motif. Position 258 (Lys258) interacts with ATP.

It belongs to the class-I aminoacyl-tRNA synthetase family. Glutamate--tRNA ligase type 1 subfamily. In terms of assembly, monomer.

It is found in the cytoplasm. The catalysed reaction is tRNA(Glu) + L-glutamate + ATP = L-glutamyl-tRNA(Glu) + AMP + diphosphate. Catalyzes the attachment of glutamate to tRNA(Glu) in a two-step reaction: glutamate is first activated by ATP to form Glu-AMP and then transferred to the acceptor end of tRNA(Glu). This Lactococcus lactis subsp. lactis (strain IL1403) (Streptococcus lactis) protein is Glutamate--tRNA ligase.